A 548-amino-acid chain; its full sequence is C2H2-type transcription factor MSN2 (548 aa).

2 consecutive C2H2-type zinc fingers follow at residues 420–448 and 449–471; these read FKCE…QDKP and FECN…ARTH.

As to quaternary structure, interacts with HOG1/OSM1.

The protein localises to the nucleus. Its subcellular location is the cytoplasm. Its function is as follows. Transcription factor that acts as a key downstream transcription factor in the HOG1-MAPK pathway. Regulates the expression of a series of downstream genes and controls vegetative growth, conidiogenesis, cell wall integrity, stress response, mitochondrial morphology, and pathogenicity. Binds to a putative promoter region 1500 bp upstream of the start codons of the target genes MGG_07019, POX1 and DCI1. Binds to the AGGGG and CCCCT motif of the COS1 promoter region. Involved in fatty acid beta-oxidation by directly regulating the expression of the dienoyl-CoA isomerase DCI1, thereby facilitating invasive hyphal growth during the early infection stage. Targets also the 3-methylglutaconyl-CoA hydratase-encoding gene (AUH1) to control mitochondrial morphology and mitophagy, which are critical for the infectious growth of the pathogen. This Pyricularia oryzae (strain 70-15 / ATCC MYA-4617 / FGSC 8958) (Rice blast fungus) protein is C2H2-type transcription factor MSN2.